Consider the following 347-residue polypeptide: NADH-ubiquinone oxidoreductase chain 2 (347 aa).

The next 10 helical transmembrane spans lie at 1–21 (MNPI…TIVM), 25–45 (HWLT…PMLM), 59–79 (YFLT…INLM), 96–116 (IILT…FWVP), 148–168 (IINL…GGWG), 178–198 (IMAY…IYNP), 200–220 (LTML…MLLI), 237–257 (MPLI…LPPL), 274–294 (NSII…YFYM), and 326–346 (LSPL…MMIL).

Belongs to the complex I subunit 2 family. As to quaternary structure, core subunit of respiratory chain NADH dehydrogenase (Complex I) which is composed of 45 different subunits. Interacts with TMEM242.

Its subcellular location is the mitochondrion inner membrane. It carries out the reaction a ubiquinone + NADH + 5 H(+)(in) = a ubiquinol + NAD(+) + 4 H(+)(out). In terms of biological role, core subunit of the mitochondrial membrane respiratory chain NADH dehydrogenase (Complex I) which catalyzes electron transfer from NADH through the respiratory chain, using ubiquinone as an electron acceptor. Essential for the catalytic activity and assembly of complex I. This is NADH-ubiquinone oxidoreductase chain 2 from Gardnerycteris crenulata (Striped hairy-nosed bat).